We begin with the raw amino-acid sequence, 760 residues long: ATP-dependent DNA helicase Hel308 (760 aa).

ATP is bound by residues Gln28 and 46-53 (IPTASGKT). The region spanning 33–199 (EMGLLEKKNL…WLGAALVLSE (167 aa)) is the Helicase ATP-binding domain. Positions 144–147 (DEIH) match the DEAH box motif. A Helicase C-terminal domain is found at 232-426 (AVNLVLDTIK…SKLGTENALR (195 aa)).

Belongs to the helicase family. Hel308 subfamily. As to quaternary structure, monomer.

The enzyme catalyses Couples ATP hydrolysis with the unwinding of duplex DNA by translocating in the 3'-5' direction.. It catalyses the reaction ATP + H2O = ADP + phosphate + H(+). Its function is as follows. DNA-dependent ATPase and 3'-5' DNA helicase that may be involved in repair of stalled replication forks. In Methanococcoides burtonii (strain DSM 6242 / NBRC 107633 / OCM 468 / ACE-M), this protein is ATP-dependent DNA helicase Hel308.